Reading from the N-terminus, the 61-residue chain is Photosystem II reaction center protein K (61 aa).

A propeptide spanning residues 1–24 (MLNILNLICICLNFALYSSSFFFT) is cleaved from the precursor. Residues 40-60 (MPVIPLFFFLLAFVWQAAVSF) traverse the membrane as a helical segment.

The protein belongs to the PsbK family. In terms of assembly, PSII is composed of 1 copy each of membrane proteins PsbA, PsbB, PsbC, PsbD, PsbE, PsbF, PsbH, PsbI, PsbJ, PsbK, PsbL, PsbM, PsbT, PsbX, PsbY, PsbZ, Psb30/Ycf12, at least 3 peripheral proteins of the oxygen-evolving complex and a large number of cofactors. It forms dimeric complexes.

It is found in the plastid. Its subcellular location is the chloroplast thylakoid membrane. Its function is as follows. One of the components of the core complex of photosystem II (PSII). PSII is a light-driven water:plastoquinone oxidoreductase that uses light energy to abstract electrons from H(2)O, generating O(2) and a proton gradient subsequently used for ATP formation. It consists of a core antenna complex that captures photons, and an electron transfer chain that converts photonic excitation into a charge separation. This is Photosystem II reaction center protein K from Populus alba (White poplar).